Reading from the N-terminus, the 117-residue chain is Ig heavy chain V region MOO (117 aa).

Residues 1–116 (EVKLVESGGD…FGQGTIVTVS (116 aa)) form the Ig-like domain.

The chain is Ig heavy chain V region MOO from Canis lupus familiaris (Dog).